Consider the following 267-residue polypeptide: Phosphate import ATP-binding protein PstB 2 (267 aa).

The ABC transporter domain occupies 21–262 (LATKDLHVYY…AQCQSTNDYV (242 aa)). ATP is bound at residue 53–60 (GPSGCGKS).

Belongs to the ABC transporter superfamily. Phosphate importer (TC 3.A.1.7) family. As to quaternary structure, the complex is composed of two ATP-binding proteins (PstB), two transmembrane proteins (PstC and PstA) and a solute-binding protein (PstS).

The protein localises to the cell membrane. The catalysed reaction is phosphate(out) + ATP + H2O = ADP + 2 phosphate(in) + H(+). Its function is as follows. Part of the ABC transporter complex PstSACB involved in phosphate import. Responsible for energy coupling to the transport system. The protein is Phosphate import ATP-binding protein PstB 2 of Streptococcus pyogenes serotype M1.